The primary structure comprises 160 residues: MIKAVYPGSFDPVTNGHIDIIQRGAKIYDEVIVLVAENISKTPLFSLEERLDMLRHSLKDIPNVKIDHFSGLLVDYLKKIDVKIIIRGLRAVSDFEYEFQQALTNKKLYPECETVFLVSDLKYTFLSSSMVKEIAKFGGCIKGLVPDYVAEKLYEKFKVK.

Residue serine 9 participates in substrate binding. ATP-binding positions include 9–10 (SF) and histidine 17. Substrate-binding residues include lysine 41, leucine 73, and arginine 87. Residues 88 to 90 (GLR), glutamate 98, and 123 to 129 (YTFLSSS) contribute to the ATP site.

It belongs to the bacterial CoaD family. Homohexamer. Mg(2+) serves as cofactor.

The protein localises to the cytoplasm. It catalyses the reaction (R)-4'-phosphopantetheine + ATP + H(+) = 3'-dephospho-CoA + diphosphate. It participates in cofactor biosynthesis; coenzyme A biosynthesis; CoA from (R)-pantothenate: step 4/5. Reversibly transfers an adenylyl group from ATP to 4'-phosphopantetheine, yielding dephospho-CoA (dPCoA) and pyrophosphate. This Dictyoglomus turgidum (strain DSM 6724 / Z-1310) protein is Phosphopantetheine adenylyltransferase.